A 228-amino-acid chain; its full sequence is Imidazole glycerol phosphate synthase subunit HisH (228 aa).

One can recognise a Glutamine amidotransferase type-1 domain in the interval 4–218; the sequence is DIAVVDYGMG…VTWNPGEHAS (215 aa). Catalysis depends on Cys-83, which acts as the Nucleophile. Active-site residues include His-193 and Glu-195.

As to quaternary structure, heterodimer of HisH and HisF.

Its subcellular location is the cytoplasm. It carries out the reaction 5-[(5-phospho-1-deoxy-D-ribulos-1-ylimino)methylamino]-1-(5-phospho-beta-D-ribosyl)imidazole-4-carboxamide + L-glutamine = D-erythro-1-(imidazol-4-yl)glycerol 3-phosphate + 5-amino-1-(5-phospho-beta-D-ribosyl)imidazole-4-carboxamide + L-glutamate + H(+). The catalysed reaction is L-glutamine + H2O = L-glutamate + NH4(+). It participates in amino-acid biosynthesis; L-histidine biosynthesis; L-histidine from 5-phospho-alpha-D-ribose 1-diphosphate: step 5/9. Functionally, IGPS catalyzes the conversion of PRFAR and glutamine to IGP, AICAR and glutamate. The HisH subunit catalyzes the hydrolysis of glutamine to glutamate and ammonia as part of the synthesis of IGP and AICAR. The resulting ammonia molecule is channeled to the active site of HisF. This is Imidazole glycerol phosphate synthase subunit HisH from Thiobacillus denitrificans (strain ATCC 25259 / T1).